The chain runs to 95 residues: MSRSTKKGPFVDVRLLSRVETMNRGNEKRPLKTWSRDSTIFPQMVGHTIAVHDGRRHVPVYITENMVGHKLGEFAPTRTFRGHGGKKADKRGKLK.

Residues 76-95 form a disordered region; sequence PTRTFRGHGGKKADKRGKLK. Positions 80 to 95 are enriched in basic residues; it reads FRGHGGKKADKRGKLK.

It belongs to the universal ribosomal protein uS19 family.

Its function is as follows. Protein S19 forms a complex with S13 that binds strongly to the 16S ribosomal RNA. In Herpetosiphon aurantiacus (strain ATCC 23779 / DSM 785 / 114-95), this protein is Small ribosomal subunit protein uS19.